We begin with the raw amino-acid sequence, 371 residues long: DNA replication and repair protein RecF (371 aa).

Position 30 to 37 (30 to 37 (GANAQGKT)) interacts with ATP.

It belongs to the RecF family.

It localises to the cytoplasm. Functionally, the RecF protein is involved in DNA metabolism; it is required for DNA replication and normal SOS inducibility. RecF binds preferentially to single-stranded, linear DNA. It also seems to bind ATP. The polypeptide is DNA replication and repair protein RecF (Lacticaseibacillus casei (strain BL23) (Lactobacillus casei)).